The sequence spans 115 residues: Ribosomal protein uS4-like (115 aa).

This sequence belongs to the universal ribosomal protein uS4 family.

The polypeptide is Ribosomal protein uS4-like (Azoarcus sp. (strain BH72)).